We begin with the raw amino-acid sequence, 572 residues long: O-fucosyltransferase 16 (572 aa).

A helical; Signal-anchor for type II membrane protein membrane pass occupies residues leucine 17 to phenylalanine 37. N-linked (GlcNAc...) asparagine glycosylation is found at asparagine 92 and asparagine 136. Histidine 274 to arginine 276 contributes to the substrate binding site. N-linked (GlcNAc...) asparagine glycans are attached at residues asparagine 446 and asparagine 506. The tract at residues glutamate 498–aspartate 572 is disordered. Residues aspartate 521–aspartate 541 show a composition bias toward acidic residues. Asparagine 549 is a glycosylation site (N-linked (GlcNAc...) asparagine). Residues aspartate 554 to leucine 566 are compositionally biased toward acidic residues.

It belongs to the glycosyltransferase GT106 family.

The protein localises to the membrane. It functions in the pathway glycan metabolism. The chain is O-fucosyltransferase 16 from Arabidopsis thaliana (Mouse-ear cress).